A 206-amino-acid chain; its full sequence is Imidazoleglycerol-phosphate dehydratase (206 aa).

This sequence belongs to the imidazoleglycerol-phosphate dehydratase family.

The protein resides in the cytoplasm. The catalysed reaction is D-erythro-1-(imidazol-4-yl)glycerol 3-phosphate = 3-(imidazol-4-yl)-2-oxopropyl phosphate + H2O. It participates in amino-acid biosynthesis; L-histidine biosynthesis; L-histidine from 5-phospho-alpha-D-ribose 1-diphosphate: step 6/9. The sequence is that of Imidazoleglycerol-phosphate dehydratase from Leptospira interrogans serogroup Icterohaemorrhagiae serovar copenhageni (strain Fiocruz L1-130).